Consider the following 183-residue polypeptide: Pentapeptide repeat protein MfpA (183 aa).

The Pentapeptide repeat domain occupies Ser113–Ala147.

The protein belongs to the pentapeptide repeat protein family. In terms of assembly, homodimer. Probably interacts with DNA gyrase.

Functionally, might be involved in fluoroquinolone resistance. Inhibits ATP-independent DNA relaxation, ATP-dependent DNA supercoiling and ATP-dependent decatenation by endogenous gyrase, 50% inhibition occurs at 2 uM; inhibition is abolished if GyrA is mutated (Asp-87 to Gly or His). Also inhibits fluoroquinolone-promoted dsDNA cleavage. Increases fluoroquinolone (ciprofloxacin or moxifloxacin) inhibition of gyrase supercoiling activity in a concentration-dependent manner. Inhibits DNA relaxation and supercoiling by E.coli gyrase. Forms a structure that exhibits size, shape and electrostatic similarity to B-form DNA; it may bind to DNA gyrase which is postulated to protect it from fluoroquinolones. The chain is Pentapeptide repeat protein MfpA from Mycobacterium tuberculosis (strain ATCC 25618 / H37Rv).